The chain runs to 135 residues: 6-pyruvoyl tetrahydrobiopterin synthase (135 aa).

His-17 serves as a coordination point for Zn(2+). The Proton acceptor role is filled by Cys-36. The Zn(2+) site is built by His-40 and His-42. Catalysis depends on charge relay system residues His-81 and Glu-124.

It belongs to the PTPS family. In terms of assembly, homohexamer formed of two homotrimers in a head to head fashion. Zn(2+) is required as a cofactor.

It carries out the reaction 7,8-dihydroneopterin 3'-triphosphate = 6-pyruvoyl-5,6,7,8-tetrahydropterin + triphosphate + H(+). The protein operates within cofactor biosynthesis; tetrahydrobiopterin biosynthesis; tetrahydrobiopterin from 7,8-dihydroneopterin triphosphate: step 1/3. In terms of biological role, involved in the biosynthesis of tetrahydrobiopterin, an essential cofactor of aromatic amino acid hydroxylases. Catalyzes the transformation of 7,8-dihydroneopterin triphosphate into 6-pyruvoyl tetrahydropterin. The chain is 6-pyruvoyl tetrahydrobiopterin synthase (ptsA) from Dictyostelium discoideum (Social amoeba).